Here is an 808-residue protein sequence, read N- to C-terminus: Genome polyprotein (808 aa).

The interval 34 to 55 is disordered; it reads TAEVGSHQPEPLKTSVDKPGSK. 2 consecutive short sequence motifs ((L)YPX(n)L motif) follow at residues 146 to 150 and 179 to 184; these read YPHGL and YPVWEL.

Belongs to the picornaviridae polyprotein family. Homopentamer. Homooligomer. In terms of assembly, interacts with capsid protein VP2. Interacts with capsid protein VP3. As to quaternary structure, interacts with capsid protein VP1. Interacts with capsid protein VP3. Interacts with capsid protein VP1. Interacts with capsid protein VP2. In terms of processing, specific enzymatic cleavages by viral protease in vivo yield a variety of precursors and mature proteins. Polyprotein processing intermediates are produced, such as P1-2A which is a functional precursor of the structural proteins, VP0 which is a VP4-VP2 precursor, VP1-2A precursor, 3ABC precursor which is a stable and catalytically active precursor of 3A, 3B and 3C proteins, 3AB and 3CD precursors. The assembly signal 2A is removed from VP1-2A by a host protease, possibly host Cathepsin L. This cleavage occurs over a region of 3 amino-acids probably generating VP1 proteins with heterogeneous C-termini. During virion maturation, immature virions are rendered infectious following cleavage of VP0 into VP4 and VP2. This maturation seems to be an autocatalytic event triggered by the presence of RNA in the capsid and is followed by a conformational change of the particle. Post-translationally, the assembly signal 2A is removed from VP1-2A by a host protease, possibly host Cathepsin L in naked virions. This cleavage does not occur in enveloped virions. This cleavage occurs over a region of 3 amino-acids probably generating VP1 proteins with heterogeneous C-termini. In terms of processing, unlike other picornaviruses, does not seem to be myristoylated.

The protein resides in the virion. The protein localises to the host endosome. Its subcellular location is the host multivesicular body. Its function is as follows. Capsid proteins VP1, VP2, and VP3 form a closed capsid enclosing the viral positive strand RNA genome. All these proteins contain a beta-sheet structure called beta-barrel jelly roll. Together they form an icosahedral capsid (T=3) composed of 60 copies of each VP1, VP2, and VP3, with a diameter of approximately 300 Angstroms. VP1 is situated at the 12 fivefold axes, whereas VP2 and VP3 are located at the quasi-sixfold axes. The naked capsid interacts with the host receptor HAVCR1 to provide virion attachment to and probably entry into the target cell. Functionally, VP0 precursor is a component of the immature procapsids. Plays a role in the assembly of the 12 pentamers into an icosahedral structure. Has not been detected in mature virions, supposedly owing to its small size. In terms of biological role, precursor component of immature procapsids that corresponds to an extended form of the structural protein VP1. After maturation, possibly by the host Cathepsin L, the assembly signal 2A is cleaved to give rise to the mature VP1 protein. This chain is Genome polyprotein, found in Human hepatitis A virus genotype IIIA (isolate GA76) (HHAV).